The chain runs to 275 residues: Rhamnulose-1-phosphate aldolase (275 aa).

Residue Glu-117 is part of the active site. 3 residues coordinate Zn(2+): His-141, His-143, and His-212.

Belongs to the aldolase class II family. RhaD subfamily. In terms of assembly, homotetramer. Requires Zn(2+) as cofactor.

Its subcellular location is the cytoplasm. It carries out the reaction L-rhamnulose 1-phosphate = (S)-lactaldehyde + dihydroxyacetone phosphate. It participates in carbohydrate degradation; L-rhamnose degradation; glycerone phosphate from L-rhamnose: step 3/3. In terms of biological role, catalyzes the reversible cleavage of L-rhamnulose-1-phosphate to dihydroxyacetone phosphate (DHAP) and L-lactaldehyde. The protein is Rhamnulose-1-phosphate aldolase of Salmonella paratyphi C (strain RKS4594).